A 625-amino-acid polypeptide reads, in one-letter code: Zinc finger protein 652-A (625 aa).

The segment at 80–255 (FFRDSKPINE…PSDKAKSEEK (176 aa)) is disordered. Residues 82 to 100 (RDSKPINEVHSVKGERENS) are compositionally biased toward basic and acidic residues. Positions 101–127 (GESEEEEDDDDDDDDEDDEEGEEDEDE) are enriched in acidic residues. The segment covering 150-166 (KGDKGVAQDSSHIKTSS) has biased composition (basic and acidic residues). Acidic residues predominate over residues 167–186 (DDEEGDSGEDDQDSHEDEEN). The segment covering 240–255 (PKEPKSPSDKAKSEEK) has biased composition (basic and acidic residues). Residues 258 to 281 (LTCDKCPRVFNTRWYLEKHMNVTH) form a C2H2-type 1 zinc finger. Residues 285–307 (QICDKCGKKFVLESELSLHLQTD) form a C2H2-type 2; degenerate zinc finger. 6 consecutive C2H2-type zinc fingers follow at residues 312–335 (IQCITCNKTFKKLWSLHEHIKIVH), 342–364 (FSCEICEKKFYTMAHVRKHLVAH), 370–392 (FTCETCGKSFKRSMSLKVHSLQH), 398–420 (FRCENCDERFQYKYQLRSHMSIH), 426–448 (FMCQWCGKDFNMKQYFDEHMKTH), and 454–476 (FICEICGKSFTSRPNMKRHRRTH). Residues 482 to 505 (YPCDVCGMRFRFSNMLKAHKEKCF) form a C2H2-type 9; degenerate zinc finger.

This sequence belongs to the krueppel C2H2-type zinc-finger protein family.

The protein resides in the nucleus. Functionally, may be involved in transcriptional regulation. The chain is Zinc finger protein 652-A (znf652-a) from Xenopus laevis (African clawed frog).